The following is a 175-amino-acid chain: Large ribosomal subunit protein uL10 (175 aa).

This sequence belongs to the universal ribosomal protein uL10 family. As to quaternary structure, part of the ribosomal stalk of the 50S ribosomal subunit. The N-terminus interacts with L11 and the large rRNA to form the base of the stalk. The C-terminus forms an elongated spine to which L12 dimers bind in a sequential fashion forming a multimeric L10(L12)X complex.

Its function is as follows. Forms part of the ribosomal stalk, playing a central role in the interaction of the ribosome with GTP-bound translation factors. In Synechococcus elongatus (strain ATCC 33912 / PCC 7942 / FACHB-805) (Anacystis nidulans R2), this protein is Large ribosomal subunit protein uL10.